A 243-amino-acid polypeptide reads, in one-letter code: Large ribosomal subunit protein uL2 (243 aa).

Residues 202–243 (HGGGRHQHVGQSSTVSRNAPPGAKVGSIAARKTGRAKIKDRR) are disordered. Over residues 233–243 (KTGRAKIKDRR) the composition is skewed to basic residues.

It belongs to the universal ribosomal protein uL2 family. Part of the 50S ribosomal subunit. Forms a bridge to the 30S subunit in the 70S ribosome.

One of the primary rRNA binding proteins. Required for association of the 30S and 50S subunits to form the 70S ribosome, for tRNA binding and peptide bond formation. It has been suggested to have peptidyltransferase activity; this is somewhat controversial. Makes several contacts with the 16S rRNA in the 70S ribosome. In Cenarchaeum symbiosum (strain A), this protein is Large ribosomal subunit protein uL2.